Consider the following 204-residue polypeptide: EVTKPETINYRTLKPEMDGLFCEKIFGPSKDWECHCGKYKRVRHRGIVCERCGVEVTESRVRRHRMGFIKLAAPVSHVWYLKGIPSYVAILLDMPLRDVEQIVYFNCYVVLDPGDHKELKYKQLLTEDEWLEIEDEIYAEESEIENEPVVGIGAEALKQLLEDLNLEEVAEQLREEINGSKGQKRAKLIKRLRVIDNFVATSAR.

Residues C34, C36, C49, and C52 each contribute to the Zn(2+) site.

It belongs to the RNA polymerase beta' chain family. RpoC1 subfamily. In cyanobacteria the RNAP catalytic core is composed of 2 alpha, 1 beta, 1 beta', 1 gamma and 1 omega subunit. When a sigma factor is associated with the core the holoenzyme is formed, which can initiate transcription. Zn(2+) serves as cofactor.

The enzyme catalyses RNA(n) + a ribonucleoside 5'-triphosphate = RNA(n+1) + diphosphate. Functionally, DNA-dependent RNA polymerase catalyzes the transcription of DNA into RNA using the four ribonucleoside triphosphates as substrates. The polypeptide is DNA-directed RNA polymerase subunit gamma (rpoC1) (Synechococcus sp. (strain WH8103)).